The primary structure comprises 490 residues: Betaine aldehyde dehydrogenase (490 aa).

K(+) contacts are provided by Thr-26, Ile-27, and Asp-93. Residue 150–152 participates in NAD(+) binding; the sequence is GAW. The active-site Charge relay system is Lys-162. 176–179 contributes to the NAD(+) binding site; sequence KPSE. Val-180 lines the K(+) pocket. Position 230 to 233 (230 to 233) interacts with NAD(+); the sequence is GVAS. Leu-246 is a K(+) binding site. Glu-252 (proton acceptor) is an active-site residue. Positions 254, 286, and 387 each coordinate NAD(+). Cys-286 functions as the Nucleophile in the catalytic mechanism. At Cys-286 the chain carries Cysteine sulfenic acid (-SOH). 2 residues coordinate K(+): Lys-457 and Gly-460. Catalysis depends on Glu-464, which acts as the Charge relay system.

Belongs to the aldehyde dehydrogenase family. Dimer of dimers. K(+) is required as a cofactor.

It carries out the reaction betaine aldehyde + NAD(+) + H2O = glycine betaine + NADH + 2 H(+). It functions in the pathway amine and polyamine biosynthesis; betaine biosynthesis via choline pathway; betaine from betaine aldehyde: step 1/1. Involved in the biosynthesis of the osmoprotectant glycine betaine. Catalyzes the irreversible oxidation of betaine aldehyde to the corresponding acid. This is Betaine aldehyde dehydrogenase from Escherichia coli O157:H7.